The sequence spans 276 residues: Rhomboid protease GlpG (276 aa).

The next 6 membrane-spanning stretches (helical) occupy residues 96-116 (VTWL…IVGA), 142-162 (AFMH…WYIG), 169-189 (LGSG…GYVQ), 192-212 (FSGP…GYAW), 229-249 (LIAF…GMSM), and 250-270 (ANGA…ADTV). The active-site Nucleophile is the S201. The active site involves H254.

This sequence belongs to the peptidase S54 family.

It is found in the cell inner membrane. The enzyme catalyses Cleaves type-1 transmembrane domains using a catalytic dyad composed of serine and histidine that are contributed by different transmembrane domains.. Rhomboid-type serine protease that catalyzes intramembrane proteolysis. The polypeptide is Rhomboid protease GlpG (Citrobacter koseri (strain ATCC BAA-895 / CDC 4225-83 / SGSC4696)).